We begin with the raw amino-acid sequence, 300 residues long: Beta-lactamase (300 aa).

The first 29 residues, 1-29 (MTMFKTTFRQTATIAVSLISLLVSPMLWA), serve as a signal peptide directing secretion. Serine 75 (acyl-ester intermediate) is an active-site residue. 239–241 (KTG) provides a ligand contact to substrate.

It belongs to the class-A beta-lactamase family. In terms of assembly, monomer.

It catalyses the reaction a beta-lactam + H2O = a substituted beta-amino acid. Functionally, hydrolyzes broad-spectrum beta-lactam antibiotics. Active against cephalosporins such as cefuroxime and cefotaxime. This Proteus vulgaris protein is Beta-lactamase (blaB).